The chain runs to 208 residues: Fusaric acid resistance protein FusD (208 aa).

A helical transmembrane segment spans residues 7-29 (LLLSMLVSAIAFAVLFPPTAPWL).

Its subcellular location is the cell membrane. Its function is as follows. Involved in the resistance (detoxification) of the fungal toxin fusaric acid. In Burkholderia cepacia (Pseudomonas cepacia), this protein is Fusaric acid resistance protein FusD (fusD).